Consider the following 298-residue polypeptide: N-acetylmuramic acid 6-phosphate etherase (298 aa).

The SIS domain occupies 55 to 218 (IHAQVSGGGR…STGLMIKSGK (164 aa)). Glu-83 acts as the Proton donor in catalysis. Residue Glu-114 is part of the active site.

Belongs to the GCKR-like family. MurNAc-6-P etherase subfamily. In terms of assembly, homodimer.

It catalyses the reaction N-acetyl-D-muramate 6-phosphate + H2O = N-acetyl-D-glucosamine 6-phosphate + (R)-lactate. The protein operates within amino-sugar metabolism; 1,6-anhydro-N-acetylmuramate degradation. It functions in the pathway amino-sugar metabolism; N-acetylmuramate degradation. It participates in cell wall biogenesis; peptidoglycan recycling. Its function is as follows. Specifically catalyzes the cleavage of the D-lactyl ether substituent of MurNAc 6-phosphate, producing GlcNAc 6-phosphate and D-lactate. Together with AnmK, is also required for the utilization of anhydro-N-acetylmuramic acid (anhMurNAc) either imported from the medium or derived from its own cell wall murein, and thus plays a role in cell wall recycling. The chain is N-acetylmuramic acid 6-phosphate etherase from Escherichia coli O17:K52:H18 (strain UMN026 / ExPEC).